Consider the following 1440-residue polypeptide: MQTLKTARLTSNPASIPTSSSSSAISAAAIQKTLDAVNRPPAVRASGILRHRTLPAPTQETAHHLDADPKTTELMARFFISQGIPFECAHEPAFLELMKHVDPNCVIPPTNVTKKLVDKISTSSKPQVNYTKTVGPLSVTIDICGDEDEKYLAFSIHYFEDLYERKNAIYLRKLLLTELDSNSLLTNIRRSVNSYSFSNVKFTNIVCPNEEICKLVEESAVVKRYNVCFYNYVTRFVADLMEIEEFSSGLTQLRTFVRYMKQNSDMYSKFRRMQLQKNAELDIPSIDSGDWHSTAIFLTRCLVWHDTFTEFCGKLDILHYIDNETFNHLIYLQRLLQQCMKHCRELSIPNNSISQVVPAIMSIRNFIASNSMGYRFQKRIRDSFTTSFKEITSGPSQDRYDIATLLDPRFAYRDTVYTAQTWRSLEKKVIDDFVNSDLQNDKNFYQDISILNQEQRYDIIKKEFAYYRQTSFVERPEENENSNHWWGMRQTDMEFLAVIAREYLASPAVSIDAGYYFGNGGKFQHICHTYSHQRLENCLALAGNYQTFRGKGASVDVISQSMIETLNNTASRLQKQVHLGLYAHGVDNISSDRDVQSIVGHHYPPMPTVANYDIPHVPKEEEKPPVANLQSTSSPATSSPTIIRPRAAPPPRTLAQGRPIPLNGKELKAVPIRQIPLQVRPLPPRPANVPIVPRPTVPQQFIKAPAPKPITLQAVVCSIPEKEIKKETEDVALLEKIKDEPLDEDDFNHPSTDPVPNRTTASSQGPSSYPRKIVVLASKLPTSQSSSPSTATSAQARSHVTTAQLIRCGPSEGTVPQKIHSHNFVQKFAQKQNFVHKYALNSQDHTGRLNQTVPMRAALRLPNSEQKSGAPSSINGKVQRDDFKLEPLDDFNGEPDYDNLIGAQRLMYSDNLNDASAEDAFARHRVTMEFQKRRACNRRCAVCGHLEIHERLKNVTIENEKLLIMLGCIYRGEFTLGQAQLFMARESKTYICRLHFLETLDEIYQMLRLKSADDILICPLDLIQNALITVSALRPHIIASQLRKILHDFAERNNHLRETPAELKKLGQQYFDYREPEPEPERNDVDEQEIIPKLFRQPRKQVLEADQHDGTVKVIEQEDFKLPTVKPSENEECDNPGVCCFCSKRGDRGGMLRVPRSEERLARWVDKLGPEFEARLHTNTENLICRSHFPDAAFSSRGRLLKGMIPDAAPEKVETTYIIQGNNFLKLKERKSGTDKNSAIDLANMLNPDGVEYTQEEEEEEEYEEMSRSPTEETSDDEPSQAAVYNNAPVIKRTYRKRELSNEDGPLNLVTPPAHTPNPRGRPRKYPKNSVTPEAEKSLTDYDYNPGTSQRRALKKGYVQLEDGEIVGEDCEYVPEKTPSGRLIRQAVARRSFAFADEEEEEEEYEESPIVKKPKIAGRPVGRPRKDANKLPTPTPPSNE.

Disordered regions lie at residues M1–S22, I48–A67, P618–I660, and K738–Y769. A compositionally biased stretch (low complexity) spans T10–S22. Over residues S631–R646 the composition is skewed to low complexity. Positions N757 to S767 are enriched in polar residues. The THAP-type zinc finger occupies N1135–A1209. 3 disordered regions span residues A1239–Q1281, R1298–Q1350, and F1395–E1440. Acidic residues predominate over residues T1254 to E1264. A DNA-binding region (a.T hook 1) is located at residues P1317–N1329. The span at A1396–E1407 shows a compositional bias: acidic residues. Residues G1418–K1430 constitute a DNA-binding region (a.T hook 2).

Functionally, synthetic multivulva (synMuv) class B protein. SynMuv proteins are required to repress the induction of vulval development. Acts redundantly with SynMuv class A protein lin-15A to negatively regulate vulval development. Regulates let-23 basal activity. The sequence is that of Protein lin-15B from Caenorhabditis elegans.